A 425-amino-acid chain; its full sequence is Metacaspase-1 (425 aa).

The tract at residues methionine 1–serine 110 is disordered. Residues tyrosine 13–asparagine 28 show a composition bias toward low complexity. Polar residues-rich tracts occupy residues glycine 29–glutamine 38 and threonine 88–serine 110. Catalysis depends on residues histidine 214 and cysteine 270.

Belongs to the peptidase C14B family.

It is found in the cytoplasm. The protein resides in the nucleus. Involved in cell death (apoptosis). The sequence is that of Metacaspase-1 (pca1) from Schizosaccharomyces pombe (strain 972 / ATCC 24843) (Fission yeast).